The sequence spans 104 residues: Nucleoid-associated protein Ccon26_18480 (104 aa).

Residues 16 to 34 (DVQKQAKQMEEESKNKEFG) show a composition bias toward basic and acidic residues. The interval 16-38 (DVQKQAKQMEEESKNKEFGAKSG) is disordered.

Belongs to the YbaB/EbfC family. Homodimer.

It is found in the cytoplasm. Its subcellular location is the nucleoid. Binds to DNA and alters its conformation. May be involved in regulation of gene expression, nucleoid organization and DNA protection. In Campylobacter concisus (strain 13826), this protein is Nucleoid-associated protein Ccon26_18480.